The following is a 305-amino-acid chain: Methionyl-tRNA formyltransferase (305 aa).

Position 108–111 (108–111 (SLLP)) interacts with (6S)-5,6,7,8-tetrahydrofolate.

The protein belongs to the Fmt family.

The catalysed reaction is L-methionyl-tRNA(fMet) + (6R)-10-formyltetrahydrofolate = N-formyl-L-methionyl-tRNA(fMet) + (6S)-5,6,7,8-tetrahydrofolate + H(+). In terms of biological role, attaches a formyl group to the free amino group of methionyl-tRNA(fMet). The formyl group appears to play a dual role in the initiator identity of N-formylmethionyl-tRNA by promoting its recognition by IF2 and preventing the misappropriation of this tRNA by the elongation apparatus. In Thermus thermophilus (strain ATCC 27634 / DSM 579 / HB8), this protein is Methionyl-tRNA formyltransferase.